The following is a 258-amino-acid chain: Phosphate import ATP-binding protein PstB (258 aa).

The region spanning 13–253 (ITVENLNLWY…PREKSTEDYI (241 aa)) is the ABC transporter domain. 45 to 52 (GPSGCGKS) provides a ligand contact to ATP.

The protein belongs to the ABC transporter superfamily. Phosphate importer (TC 3.A.1.7) family. As to quaternary structure, the complex is composed of two ATP-binding proteins (PstB), two transmembrane proteins (PstC and PstA) and a solute-binding protein (PstS).

The protein resides in the cell membrane. The catalysed reaction is phosphate(out) + ATP + H2O = ADP + 2 phosphate(in) + H(+). Part of the ABC transporter complex PstSACB involved in phosphate import. Responsible for energy coupling to the transport system. This is Phosphate import ATP-binding protein PstB from Methanosarcina mazei (strain ATCC BAA-159 / DSM 3647 / Goe1 / Go1 / JCM 11833 / OCM 88) (Methanosarcina frisia).